The primary structure comprises 185 residues: Small ribosomal subunit protein bS16 (185 aa).

The tract at residues 83–185 (QWTHGNNPEK…APASEETTEG (103 aa)) is disordered. Residues 89-125 (NPEKAKPGKKAQERDAERTQRDADRVAAEAQAKEDAK) show a composition bias toward basic and acidic residues. Composition is skewed to low complexity over residues 126–146 (AAAA…AAAP) and 159–176 (VEAA…AEEA).

It belongs to the bacterial ribosomal protein bS16 family.

In Caulobacter sp. (strain K31), this protein is Small ribosomal subunit protein bS16.